The chain runs to 142 residues: Large ribosomal subunit protein uL11 (142 aa).

This sequence belongs to the universal ribosomal protein uL11 family. In terms of assembly, part of the ribosomal stalk of the 50S ribosomal subunit. Interacts with L10 and the large rRNA to form the base of the stalk. L10 forms an elongated spine to which L12 dimers bind in a sequential fashion forming a multimeric L10(L12)X complex. One or more lysine residues are methylated.

Forms part of the ribosomal stalk which helps the ribosome interact with GTP-bound translation factors. The polypeptide is Large ribosomal subunit protein uL11 (Nocardioides sp. (strain ATCC BAA-499 / JS614)).